The sequence spans 401 residues: Argininosuccinate synthase (401 aa).

ATP contacts are provided by residues 10-18 (AYSGGVDTS) and A38. Y89 is an L-citrulline binding site. Residue G119 coordinates ATP. Residues T121, N125, and D126 each contribute to the L-aspartate site. N125 provides a ligand contact to L-citrulline. 5 residues coordinate L-citrulline: R129, S177, S186, E262, and Y274.

Belongs to the argininosuccinate synthase family. Type 1 subfamily. Homotetramer.

The protein resides in the cytoplasm. The enzyme catalyses L-citrulline + L-aspartate + ATP = 2-(N(omega)-L-arginino)succinate + AMP + diphosphate + H(+). It functions in the pathway amino-acid biosynthesis; L-arginine biosynthesis; L-arginine from L-ornithine and carbamoyl phosphate: step 2/3. The chain is Argininosuccinate synthase from Synechococcus sp. (strain WH7803).